Reading from the N-terminus, the 188-residue chain is Probable nicotinate-nucleotide adenylyltransferase (188 aa).

Belongs to the NadD family.

The catalysed reaction is nicotinate beta-D-ribonucleotide + ATP + H(+) = deamido-NAD(+) + diphosphate. It functions in the pathway cofactor biosynthesis; NAD(+) biosynthesis; deamido-NAD(+) from nicotinate D-ribonucleotide: step 1/1. In terms of biological role, catalyzes the reversible adenylation of nicotinate mononucleotide (NaMN) to nicotinic acid adenine dinucleotide (NaAD). The sequence is that of Probable nicotinate-nucleotide adenylyltransferase from Rhizobium meliloti (strain 1021) (Ensifer meliloti).